The chain runs to 148 residues: Hemoglobin subunit beta-A (148 aa).

The Globin domain maps to 3–148 (DWTDAERAAI…VVSALGRQYH (146 aa)). Positions 64 and 93 each coordinate heme b.

It belongs to the globin family. In terms of assembly, heterotetramer of two alpha chains and two beta chains. In terms of tissue distribution, red blood cells.

Functionally, involved in oxygen transport from gills to the various peripheral tissues. This Seriola quinqueradiata (Five-ray yellowtail) protein is Hemoglobin subunit beta-A (hbb1).